A 618-amino-acid polypeptide reads, in one-letter code: UvrABC system protein C (618 aa).

In terms of domain architecture, GIY-YIG spans 13–92; that stretch reads DKPGVYLMKN…IKKYRPKYNI (80 aa). Residues 204–239 enclose the UVR domain; the sequence is LDIVENFKLNMEKAAENLEFEKAAMLRDKINIIEKI.

Belongs to the UvrC family. Interacts with UvrB in an incision complex.

The protein resides in the cytoplasm. In terms of biological role, the UvrABC repair system catalyzes the recognition and processing of DNA lesions. UvrC both incises the 5' and 3' sides of the lesion. The N-terminal half is responsible for the 3' incision and the C-terminal half is responsible for the 5' incision. The sequence is that of UvrABC system protein C from Clostridium botulinum (strain Okra / Type B1).